The chain runs to 586 residues: Capsid scaffolding protein (586 aa).

Catalysis depends on charge relay system residues His-53, Ser-123, and His-142. The segment covering 251 to 263 (SEETPENAIKDRS) has biased composition (basic and acidic residues). Disordered stretches follow at residues 251–288 (SEETPENAIKDRSVSTQTAPSFDISESQQPSGQTHVPA), 330–364 (ARRDNDRRPVSPSREFSRRSRDSTHECSPGRDIWP), 458–486 (NKRDSEYSENNPRKRSARTISENDPYFPG), and 530–586 (SASN…MMAD). Residues 264–284 (VSTQTAPSFDISESQQPSGQT) are compositionally biased toward polar residues. Residues 312–331 (EDMVYVPFEKYASLLAASAR) are interaction with pAP. 2 interaction with major capsid protein regions span residues 566-586 (DAQTKLKRKKEAAAFAQMMAD) and 567-586 (AQTKLKRKKEAAAFAQMMAD).

This sequence belongs to the herpesviridae capsid scaffolding protein family. As to quaternary structure, homomultimer. Interacts with major capsid protein. Exists in a monomer-dimer equilibrium with the dimer being the active species. Post-translationally, capsid scaffolding protein is cleaved by assemblin after formation of the spherical procapsid. As a result, the capsid obtains its mature, icosahedral shape. Cleavages occur at two or more sites: release (R-site) and maturation (M-site).

It is found in the host cytoplasm. It localises to the host nucleus. The catalysed reaction is Cleaves -Ala-|-Ser- and -Ala-|-Ala- bonds in the scaffold protein.. Acts as a scaffold protein by binding major capsid protein in the cytoplasm, inducing the nuclear localization of both proteins. Multimerizes in the nucleus such as major capsid protein forms the icosahedral T=16 capsid. Autocatalytic cleavage releases the assembly protein, and subsequently abolishes interaction with major capsid protein. Cleavages products are evicted from the capsid before or during DNA packaging. In terms of biological role, protease that plays an essential role in virion assembly within the nucleus. Catalyzes the cleavage of the assembly protein after formation of the spherical procapsid. By that cleavage, the capsid matures and gains its icosahedral shape. The cleavage sites seem to include -Ala-Ser-, -Ala-Ala-, as well as Ala-Thr bonds. Assemblin and cleavages products are evicted from the capsid before or during DNA packaging. Its function is as follows. Plays a major role in capsid assembly. Acts as a scaffold protein by binding major capsid protein. Multimerizes in the nucleus such as major capsid protein forms the icosahedral T=16 capsid. Cleaved by assemblin after capsid completion. The cleavages products are evicted from the capsid before or during DNA packaging. The sequence is that of Capsid scaffolding protein from Gallus gallus (Chicken).